The chain runs to 338 residues: 2-oxoglutarate-dependent dioxygenase ecdG (338 aa).

The 109-residue stretch at 165-273 (PSVTNLGFLR…KYTLAYFVRP (109 aa)) folds into the Fe2OG dioxygenase domain. 3 residues coordinate Fe cation: histidine 190, aspartate 192, and histidine 249. Lysine 264 is a 2-oxoglutarate binding site.

It belongs to the iron/ascorbate-dependent oxidoreductase family. It depends on Fe(2+) as a cofactor.

It functions in the pathway antifungal biosynthesis. In terms of biological role, 2-oxoglutarate-dependent dioxygenase; part of the gene cluster that mediates the biosynthesis of echinocandin B, a fungal lipidated cyclic hexapeptide that acts as an antifungal agent. Linoleoyl-AMP, produced by the fatty-acyl-AMP ligase ecdI, is transferred to the initiation carrier domain (T0) of ecdA. The linoleoyl-S-phosphopantetheinyl-T0 is sequentially extended with L-ornithine, L-threonine, L-proline, L-homotyrosine, L-threonine, and 4R-methyl-L-proline to form the linear hexapeptide. Thereafter, the terminal condensation (C7) performs macrocyclization of the NRPS product and the cyclic scaffold is released from ecdA. All six of the amino acid residues are hydroxylated, including 4R,5R-dihydroxy-L-ornithine, 4R-hydroxyl-L-proline, 3S,4S-dihydroxy-L-homotyrosine, and 3S-hydroxyl-4S-methyl-L-prolin. In the pathway, all the hydroxylation reactions are proposed to occur following completion of the cyclic peptide, so the unhydroxylated precursor produced by ecdA will undergo six rounds of hydroxylation. Five hydroxylase genes (ecdG, ecdH, ecdK, htyE and htyF) are embedded within the echinocandin B (ecd) and L-homotyrosine (hty) clusters. In Aspergillus rugulosus (Emericella rugulosa), this protein is 2-oxoglutarate-dependent dioxygenase ecdG.